Consider the following 379-residue polypeptide: UDP-4-amino-4-deoxy-L-arabinose--oxoglutarate aminotransferase (379 aa).

The residue at position 182 (Lys182) is an N6-(pyridoxal phosphate)lysine.

This sequence belongs to the DegT/DnrJ/EryC1 family. ArnB subfamily. Homodimer. Pyridoxal 5'-phosphate is required as a cofactor.

The enzyme catalyses UDP-4-amino-4-deoxy-beta-L-arabinose + 2-oxoglutarate = UDP-beta-L-threo-pentopyranos-4-ulose + L-glutamate. It participates in nucleotide-sugar biosynthesis; UDP-4-deoxy-4-formamido-beta-L-arabinose biosynthesis; UDP-4-deoxy-4-formamido-beta-L-arabinose from UDP-alpha-D-glucuronate: step 2/3. It functions in the pathway bacterial outer membrane biogenesis; lipopolysaccharide biosynthesis. Its function is as follows. Catalyzes the conversion of UDP-4-keto-arabinose (UDP-Ara4O) to UDP-4-amino-4-deoxy-L-arabinose (UDP-L-Ara4N). The modified arabinose is attached to lipid A and is required for resistance to polymyxin and cationic antimicrobial peptides. This Erwinia tasmaniensis (strain DSM 17950 / CFBP 7177 / CIP 109463 / NCPPB 4357 / Et1/99) protein is UDP-4-amino-4-deoxy-L-arabinose--oxoglutarate aminotransferase.